The chain runs to 250 residues: MLFLHDVWVNWFEGEENGYNVCHFHEWRKEDSVELLDQVPLLRVSSVLFHYIENDLSELPAELLNEVHQKAYIRKNHERTQLDHCFVVTDGIGILAVDTAGYTIPVRKSRLIPRQEQLVYEMVKDVEAETYEFAPEKLQSSKEYHILSLSPEHVRGLTRKERQLKQLLFMALDQLKGLQNRAEIAYWYTEWNPYMYEQIKRMTFEEIWDMLFNETIDGWSDKHRDFCENLIKGQPFFEKLWEIENESKVN.

It belongs to the UPF0736 family.

The polypeptide is UPF0736 protein BLi01230/BL03322 (Bacillus licheniformis (strain ATCC 14580 / DSM 13 / JCM 2505 / CCUG 7422 / NBRC 12200 / NCIMB 9375 / NCTC 10341 / NRRL NRS-1264 / Gibson 46)).